We begin with the raw amino-acid sequence, 434 residues long: Histidinol dehydrogenase (434 aa).

Positions 130, 188, and 211 each coordinate NAD(+). Serine 237, glutamine 259, and histidine 262 together coordinate substrate. Zn(2+) is bound by residues glutamine 259 and histidine 262. Catalysis depends on proton acceptor residues glutamate 326 and histidine 327. Substrate is bound by residues histidine 327, aspartate 360, glutamate 414, and histidine 419. Position 360 (aspartate 360) interacts with Zn(2+). Histidine 419 contacts Zn(2+).

It belongs to the histidinol dehydrogenase family. As to quaternary structure, homodimer. Requires Zn(2+) as cofactor.

It catalyses the reaction L-histidinol + 2 NAD(+) + H2O = L-histidine + 2 NADH + 3 H(+). It functions in the pathway amino-acid biosynthesis; L-histidine biosynthesis; L-histidine from 5-phospho-alpha-D-ribose 1-diphosphate: step 9/9. In terms of biological role, catalyzes the sequential NAD-dependent oxidations of L-histidinol to L-histidinaldehyde and then to L-histidine. The sequence is that of Histidinol dehydrogenase from Escherichia coli (strain K12).